A 610-amino-acid polypeptide reads, in one-letter code: Phragmoplastin DRP1A (610 aa).

M1 is modified (N-acetylmethionine). The Dynamin-type G domain occupies 31-300; the sequence is WDSLPAIAVV…LERVIKSRIP (270 aa). A G1 motif region spans residues 41-48; sequence GGQSSGKS. 44 to 49 contributes to the GTP binding site; it reads SSGKSS. Positions 67 to 69 are G2 motif; that stretch reads VTR. A G3 motif region spans residues 142-145; it reads DLPG. A G4 motif region spans residues 211 to 214; sequence TKID. GTP contacts are provided by residues 212–217 and 242–245; these read KIDLMD and NRSQ. Positions 241–244 are G5 motif; that stretch reads VNRS. In terms of domain architecture, GED spans 518-610; it reads LRRIGSNVLS…SEIDAVAWSK (93 aa).

It belongs to the TRAFAC class dynamin-like GTPase superfamily. Dynamin/Fzo/YdjA family. Forms homodimer and may homooligomerize and heterooligomerize to form the phragmoplastin complex. Interacts with AGD3/VAN3. May interact with CALS1. Binds to AHK2. Binds to SH3P2. Forms a complex made of SH3P2 and DRP1A and triggers its accumulation at the cell plate. Interacts with DRP2B at the plasma membrane and in forming clathrin-coated vesicles (CCV). Binds to PHIP1. In terms of tissue distribution, ubiquitous. Expressed in leaves (at protein level).

It is found in the cytoplasm. Its subcellular location is the cytoskeleton. It localises to the phragmoplast. The protein resides in the cell cortex. The protein localises to the cytoplasmic vesicle. It is found in the clathrin-coated vesicle. Its subcellular location is the cell membrane. It carries out the reaction GTP + H2O = GDP + phosphate + H(+). In terms of biological role, microtubule-associated force-producing protein that is targeted to at the leading edges of the forming cell plate during cytokinesis. Also plays a major role in plasma membrane maintenance and cell wall integrity with implications in vesicular trafficking, polar cell expansion, vascular formation, and other aspects of plant growth and development, including stigmatic papillae expansion. Collaboratively with DRP2B, participates in clathrin-coated vesicle formation during endocytosis. Necessary for BOR1 polar localization in low-boron (B) conditions as well as for BOR1 endocytosis and subsequent degradation under high-concentration of boron. Has a GTPase activity. Required for the sterols-dependent dynamic high lipid order observed at the cell plate of dividing cells. Together with SH3P2, converts the fused vesicles to tubular structures at the cell plate and phragmoplasts during cytokinesis. With DRP2B and PIP5K3, required for the precise coordination of polar ARAC3/ROP6 and ARAC4/ROP2 placement and subsequent root hair positioning during planar polarity formation in root hair-forming cells, probably by mediating the correct basal-to-planar polarity switching of D6PK into the polar, lipid-enriched domain. Involved in endocytosis required for cellulose deposition during cell wall formation and elongation. Interacts with plasma membrane-mimetic liposomes and induces their clustering. This chain is Phragmoplastin DRP1A, found in Arabidopsis thaliana (Mouse-ear cress).